We begin with the raw amino-acid sequence, 206 residues long: ATP-dependent dethiobiotin synthetase BioD (206 aa).

An ATP-binding site is contributed by 12-17 (DSGKTL). Threonine 16 provides a ligand contact to Mg(2+). The active site involves lysine 32. Glutamate 99 is a binding site for Mg(2+). An ATP-binding site is contributed by 99–102 (EGAG).

It belongs to the dethiobiotin synthetase family. In terms of assembly, homodimer. Mg(2+) is required as a cofactor.

It is found in the cytoplasm. The catalysed reaction is (7R,8S)-7,8-diammoniononanoate + CO2 + ATP = (4R,5S)-dethiobiotin + ADP + phosphate + 3 H(+). It functions in the pathway cofactor biosynthesis; biotin biosynthesis; biotin from 7,8-diaminononanoate: step 1/2. In terms of biological role, catalyzes a mechanistically unusual reaction, the ATP-dependent insertion of CO2 between the N7 and N8 nitrogen atoms of 7,8-diaminopelargonic acid (DAPA, also called 7,8-diammoniononanoate) to form a ureido ring. The chain is ATP-dependent dethiobiotin synthetase BioD from Cytophaga hutchinsonii (strain ATCC 33406 / DSM 1761 / CIP 103989 / NBRC 15051 / NCIMB 9469 / D465).